Consider the following 485-residue polypeptide: Adenylate kinase 8 (485 aa).

Adenylate kinase stretches follow at residues 58-258 (PRVF…TFVL) and 269-472 (PRIL…YTVS). 67 to 72 (ASGKHT) lines the ATP pocket. Residues 87-113 (TPESVLSSDVSLLAKEAQSYRDKGQEV) are NMP 1. Residues 140–143 (GFPK) and Q147 each bind AMP. An LID 1 region spans residues 177–206 (GKRIDTANGEVYHTTFDWPSDPTVQRNLVE). Position 218 (R218) interacts with AMP. 278 to 283 (GSGRSL) is an ATP binding site. The interval 298 to 327 (CCGQVLKEAVADQTKLGEVIQPYIENDQQV) is NMP 2. AMP contacts are provided by residues 325-327 (QQV), 354-357 (GFPR), and Q361. The interval 391 to 424 (LCMTDPVSGERYHDIYKPAPSSEVHERLQQNPRH) is LID 2. R432 provides a ligand contact to AMP.

It belongs to the adenylate kinase family.

It localises to the cytoplasm. The protein resides in the cytosol. It carries out the reaction AMP + ATP = 2 ADP. The catalysed reaction is a 2'-deoxyribonucleoside 5'-diphosphate + ATP = a 2'-deoxyribonucleoside 5'-triphosphate + ADP. It catalyses the reaction a ribonucleoside 5'-diphosphate + ATP = a ribonucleoside 5'-triphosphate + ADP. Nucleoside monophosphate (NMP) kinase that catalyzes the reversible transfer of the terminal phosphate group between nucleoside triphosphates and monophosphates. Has highest activity toward AMP, and weaker activity toward dAMP, CMP and dCMP. Also displays broad nucleoside diphosphate kinase activity. The polypeptide is Adenylate kinase 8 (ak8) (Xenopus tropicalis (Western clawed frog)).